The sequence spans 272 residues: Phosphate import ATP-binding protein PstB 2 (272 aa).

In terms of domain architecture, ABC transporter spans 26–267 (IEINNLCLNY…PIHKQTEDYI (242 aa)). An ATP-binding site is contributed by 58-65 (GPSGCGKS).

It belongs to the ABC transporter superfamily. Phosphate importer (TC 3.A.1.7) family. The complex is composed of two ATP-binding proteins (PstB), two transmembrane proteins (PstC and PstA) and a solute-binding protein (PstS).

It localises to the cell inner membrane. It catalyses the reaction phosphate(out) + ATP + H2O = ADP + 2 phosphate(in) + H(+). In terms of biological role, part of the ABC transporter complex PstSACB involved in phosphate import. Responsible for energy coupling to the transport system. The sequence is that of Phosphate import ATP-binding protein PstB 2 from Aliivibrio fischeri (strain ATCC 700601 / ES114) (Vibrio fischeri).